Here is a 329-residue protein sequence, read N- to C-terminus: Alpha-tubulin N-acetyltransferase 1 (329 aa).

The N-acetyltransferase domain maps to 5–185; the sequence is SQVALLPKLS…NNFVVFHRYF (181 aa). Residues 119–132 and 155–164 each bind acetyl-CoA; these read FFVD…GFGK and SVKFLAFLQK. Disordered regions lie at residues 218–261 and 306–329; these read PKYQ…GVGK and GARR…TPEH. Over residues 220 to 229 the composition is skewed to polar residues; it reads YQSTTGPNNN. A compositionally biased stretch (pro residues) spans 238–249; sequence TPPPPPLPPPLV. Positions 313–329 are enriched in polar residues; the sequence is PTRSGVQYNIISGTPEH.

Belongs to the acetyltransferase ATAT1 family.

The enzyme catalyses L-lysyl-[alpha-tubulin] + acetyl-CoA = N(6)-acetyl-L-lysyl-[alpha-tubulin] + CoA + H(+). In terms of biological role, specifically acetylates 'Lys-40' in alpha-tubulin on the lumenal side of microtubules. Promotes microtubule destabilization and accelerates microtubule dynamics; this activity may be independent of acetylation activity. Acetylates alpha-tubulin with a slow enzymatic rate, due to a catalytic site that is not optimized for acetyl transfer. Enters the microtubule through each end and diffuses quickly throughout the lumen of microtubules. Acetylates only long/old microtubules because of its slow acetylation rate since it does not have time to act on dynamically unstable microtubules before the enzyme is released. The chain is Alpha-tubulin N-acetyltransferase 1 from Trypanosoma cruzi (strain CL Brener).